An 84-amino-acid chain; its full sequence is Xenoxin-1 (84 aa).

Residues 1–18 (MRYAIVFFLVCVITLGEA) form the signal peptide. Cystine bridges form between C21-C42, C35-C55, C61-C76, and C77-C82.

In terms of tissue distribution, expressed by the skin dorsal glands.

It localises to the secreted. Functionally, lacks alpha-neurotoxic activity, has apparently no antibacterial activity, nor anti-coagulant potency. This Xenopus laevis (African clawed frog) protein is Xenoxin-1 (xenoxin-1).